The primary structure comprises 114 residues: Protein lin-52 homolog (114 aa).

Ser-26 and Ser-51 each carry phosphoserine.

The protein belongs to the lin-52 family. In terms of assembly, component of the DREAM complex (also named LINC complex) at least composed of E2F4, E2F5, LIN9, LIN37, LIN52, LIN54, MYBL1, MYBL2, RBL1, RBL2, RBBP4, TFDP1 and TFDP2. The complex exists in quiescent cells where it represses cell cycle-dependent genes. It dissociates in S phase when LIN9, LIN37, LIN52 and LIN54 form a subcomplex that binds to MYBL2.

This is Protein lin-52 homolog (LIN52) from Pongo abelii (Sumatran orangutan).